The primary structure comprises 83 residues: Molybdopterin synthase sulfur carrier subunit (83 aa).

Residue Gly-83 is modified to 1-thioglycine; alternate. Position 83 is a glycyl adenylate; alternate (Gly-83).

This sequence belongs to the MoaD family. MOCS2A subfamily. Heterotetramer; composed of 2 small (MOCS2A) and 2 large (MOCS2B) subunits. C-terminal thiocarboxylation occurs in 2 steps, it is first acyl-adenylated (-COAMP) via the hesA/moeB/thiF part of MOCS3, then thiocarboxylated (-COSH) via the rhodanese domain of MOCS3.

Its subcellular location is the cytoplasm. The protein operates within cofactor biosynthesis; molybdopterin biosynthesis. Functionally, acts as a sulfur carrier required for molybdopterin biosynthesis. Component of the molybdopterin synthase complex that catalyzes the conversion of precursor Z into molybdopterin by mediating the incorporation of 2 sulfur atoms into precursor Z to generate a dithiolene group. In the complex, serves as sulfur donor by being thiocarboxylated (-COSH) at its C-terminus by MOCS3. After interaction with MOCS2B, the sulfur is then transferred to precursor Z to form molybdopterin. This chain is Molybdopterin synthase sulfur carrier subunit, found in Chlamydomonas reinhardtii (Chlamydomonas smithii).